A 202-amino-acid polypeptide reads, in one-letter code: Elongation factor Ts, chloroplastic (202 aa).

The protein belongs to the EF-Ts family.

The protein resides in the plastid. The protein localises to the chloroplast. Associates with the EF-Tu.GDP complex and induces the exchange of GDP to GTP. It remains bound to the aminoacyl-tRNA.EF-Tu.GTP complex up to the GTP hydrolysis stage on the ribosome. The protein is Elongation factor Ts, chloroplastic (tsf) of Phaeodactylum tricornutum (strain CCAP 1055/1).